The sequence spans 248 residues: 2,3-bisphosphoglycerate-dependent phosphoglycerate mutase (248 aa).

Residues 9-16 (RHGHSEWN), 22-23 (TG), arginine 61, 88-91 (ERHY), lysine 99, 115-116 (RR), and 183-184 (GN) contribute to the substrate site. Histidine 10 (tele-phosphohistidine intermediate) is an active-site residue. The active-site Proton donor/acceptor is glutamate 88.

This sequence belongs to the phosphoglycerate mutase family. BPG-dependent PGAM subfamily.

It catalyses the reaction (2R)-2-phosphoglycerate = (2R)-3-phosphoglycerate. It functions in the pathway carbohydrate degradation; glycolysis; pyruvate from D-glyceraldehyde 3-phosphate: step 3/5. Functionally, catalyzes the interconversion of 2-phosphoglycerate and 3-phosphoglycerate. The polypeptide is 2,3-bisphosphoglycerate-dependent phosphoglycerate mutase (Arthrobacter sp. (strain FB24)).